A 244-amino-acid polypeptide reads, in one-letter code: Heat stress transcription factor B-3 (244 aa).

The DNA-binding element occupies 38–132 (PPPFLVKTYK…LMSNIRRRKS (95 aa)). A hydrophobic repeat HR-A/B region spans residues 173-218 (TSSSFVYTALLDENKCLKNENELLSCELGKTKKKCKQLMELVERYR). The Nuclear localization signal signature appears at 202–208 (KTKKKCK). The segment at 216–244 (RYRGEDEDATDESDDEEDEGLKLFGVKLE) is disordered. The segment covering 220 to 234 (EDEDATDESDDEEDE) has biased composition (acidic residues). Residues 236–243 (LKLFGVKL) carry the Nuclear export signal motif.

It belongs to the HSF family. Class B subfamily. In terms of assembly, homotrimer. In terms of processing, exhibits temperature-dependent phosphorylation.

The protein localises to the cytoplasm. It is found in the nucleus. Functionally, transcriptional regulator that specifically binds DNA sequence 5'-AGAAnnTTCT-3' known as heat shock promoter elements (HSE). The sequence is that of Heat stress transcription factor B-3 (HSFB3) from Arabidopsis thaliana (Mouse-ear cress).